A 491-amino-acid chain; its full sequence is Putative diacyglycerol O-acyltransferase MT2557 (491 aa).

Catalysis depends on H145, which acts as the Proton acceptor.

It belongs to the long-chain O-acyltransferase family.

It carries out the reaction an acyl-CoA + a 1,2-diacyl-sn-glycerol = a triacyl-sn-glycerol + CoA. The protein operates within glycerolipid metabolism; triacylglycerol biosynthesis. The polypeptide is Putative diacyglycerol O-acyltransferase MT2557 (Mycobacterium tuberculosis (strain CDC 1551 / Oshkosh)).